The following is a 1170-amino-acid chain: DNA-directed RNA polymerase subunit beta' (1170 aa).

Zn(2+) contacts are provided by Cys60, Cys62, Cys75, and Cys78. 3 residues coordinate Mg(2+): Asp449, Asp451, and Asp453. Zn(2+)-binding residues include Cys774, Cys848, Cys855, and Cys858. Residues 1145-1170 are disordered; that stretch reads EPGEENGEPGGERLYGMDELYGETAN.

The protein belongs to the RNA polymerase beta' chain family. As to quaternary structure, the RNAP catalytic core consists of 2 alpha, 1 beta, 1 beta' and 1 omega subunit. When a sigma factor is associated with the core the holoenzyme is formed, which can initiate transcription. Mg(2+) is required as a cofactor. The cofactor is Zn(2+).

The catalysed reaction is RNA(n) + a ribonucleoside 5'-triphosphate = RNA(n+1) + diphosphate. Its function is as follows. DNA-dependent RNA polymerase catalyzes the transcription of DNA into RNA using the four ribonucleoside triphosphates as substrates. The protein is DNA-directed RNA polymerase subunit beta' of Pelotomaculum thermopropionicum (strain DSM 13744 / JCM 10971 / SI).